The chain runs to 148 residues: Ribonuclease H (148 aa).

Residues 1 to 143 (MNQVVIYTDG…ADMLANKGVE (143 aa)) enclose the RNase H type-1 domain. Mg(2+)-binding residues include aspartate 9, glutamate 47, aspartate 69, and aspartate 135.

Belongs to the RNase H family. As to quaternary structure, monomer. Requires Mg(2+) as cofactor.

The protein localises to the cytoplasm. The catalysed reaction is Endonucleolytic cleavage to 5'-phosphomonoester.. Its function is as follows. Endonuclease that specifically degrades the RNA of RNA-DNA hybrids. This chain is Ribonuclease H, found in Acidovorax sp. (strain JS42).